The chain runs to 106 residues: Small ribosomal subunit protein uS10 (106 aa).

This sequence belongs to the universal ribosomal protein uS10 family. In terms of assembly, part of the 30S ribosomal subunit.

Its function is as follows. Involved in the binding of tRNA to the ribosomes. The sequence is that of Small ribosomal subunit protein uS10 from Mesomycoplasma hyopneumoniae (strain 232) (Mycoplasma hyopneumoniae).